The following is a 221-amino-acid chain: Urease accessory protein UreE (221 aa).

Residues 160 to 194 form a disordered region; that stretch reads VPGTNKTTGDLAEEEQETERHEPHAHAIGEHHHEK. The span at 177 to 194 shows a compositional bias: basic and acidic residues; the sequence is TERHEPHAHAIGEHHHEK.

Belongs to the UreE family.

It localises to the cytoplasm. Its function is as follows. Involved in urease metallocenter assembly. Binds nickel. Probably functions as a nickel donor during metallocenter assembly. This is Urease accessory protein UreE from Bifidobacterium longum subsp. infantis (strain ATCC 15697 / DSM 20088 / JCM 1222 / NCTC 11817 / S12).